We begin with the raw amino-acid sequence, 2112 residues long: Phenolphthiocerol synthesis polyketide synthase type I Pks15/1 (2112 aa).

One can recognise a Ketosynthase family 3 (KS3) domain in the interval 46-469 (TEPVAVVGIG…GTNAHLILEE (424 aa)). Catalysis depends on for beta-ketoacyl synthase activity residues Cys-216, His-351, and His-391. Positions 579–893 (TVVVFPGQGA…GQVFTTGVPV (315 aa)) are acyltransferase. The For acyltransferase activity role is filled by Ser-670. The interval 941–1063 (HALLGAVVER…GMLGVAAAET (123 aa)) is N-terminal hotdog fold. A dehydratase region spans residues 941 to 1101 (HALLGAVVER…YAYGPAFQGL (161 aa)). One can recognise a PKS/mFAS DH domain in the interval 941–1215 (HALLGAVVER…TRPITAEQLR (275 aa)). Residue His-973 is the Proton acceptor; for dehydratase activity of the active site. The interval 1075–1215 (AESVDISDGY…TRPITAEQLR (141 aa)) is C-terminal hotdog fold. The active-site Proton donor; for dehydratase activity is Asp-1136. The enoylreductase stretch occupies residues 1406-1711 (GTLEDLVIQP…QARHIGKVVL (306 aa)). NADP(+)-binding positions include 1536 to 1553 (VLIH…VQLA) and 1725 to 1740 (TVVI…GVLA). A beta-ketoacyl reductase region spans residues 1724 to 1905 (GTVVITGATG…SLAWGLWEQP (182 aa)). Residues 2010-2085 (ELLVGLVCLQ…AVAEYVAQQM (76 aa)) enclose the Carrier domain. Residue Ser-2045 is modified to O-(pantetheine 4'-phosphoryl)serine. A compositionally biased stretch (polar residues) spans 2084-2100 (QMSGSRPTESGDPTSQV). A disordered region spans residues 2084–2112 (QMSGSRPTESGDPTSQVVEPAAAEVSVHA).

This sequence belongs to the thiolase-like superfamily. Beta-ketoacyl-ACP synthases family. Pantetheine 4'-phosphate serves as cofactor.

It catalyses the reaction a fatty acyl-[ACP] + malonyl-[ACP] + H(+) = a 3-oxoacyl-[ACP] + holo-[ACP] + CO2. It functions in the pathway lipid metabolism; fatty acid biosynthesis. Its function is as follows. Catalyzes the elongation by iterative transfer of p-hydroxybenzoyl group from FadD22 (pHBA-S-FAdD22) to form p-hydroxyphenylalkanoate (pHPA) intermediates during phenolphthiocerol (PPOL) biosynthesis. PPOL is an important intermediate in the biosynthesis of phenolic glycolipid (mycosid B). In Mycobacterium bovis (strain ATCC BAA-935 / AF2122/97), this protein is Phenolphthiocerol synthesis polyketide synthase type I Pks15/1 (pks15/1).